Consider the following 273-residue polypeptide: Dermonecrotic toxin LdSicTox-alphaIB1aiv (273 aa).

Histidine 5 is an active-site residue. Residues glutamate 25 and aspartate 27 each contribute to the Mg(2+) site. The active-site Nucleophile is the histidine 41. Disulfide bonds link cysteine 45–cysteine 51 and cysteine 47–cysteine 190. Aspartate 85 contacts Mg(2+). N-linked (GlcNAc...) asparagine glycosylation is present at asparagine 250.

It belongs to the arthropod phospholipase D family. Class II subfamily. It depends on Mg(2+) as a cofactor. In terms of tissue distribution, expressed by the venom gland.

The protein localises to the secreted. It carries out the reaction an N-(acyl)-sphingosylphosphocholine = an N-(acyl)-sphingosyl-1,3-cyclic phosphate + choline. The enzyme catalyses an N-(acyl)-sphingosylphosphoethanolamine = an N-(acyl)-sphingosyl-1,3-cyclic phosphate + ethanolamine. The catalysed reaction is a 1-acyl-sn-glycero-3-phosphocholine = a 1-acyl-sn-glycero-2,3-cyclic phosphate + choline. It catalyses the reaction a 1-acyl-sn-glycero-3-phosphoethanolamine = a 1-acyl-sn-glycero-2,3-cyclic phosphate + ethanolamine. In terms of biological role, dermonecrotic toxins cleave the phosphodiester linkage between the phosphate and headgroup of certain phospholipids (sphingolipid and lysolipid substrates), forming an alcohol (often choline) and a cyclic phosphate. This toxin acts on sphingomyelin (SM). It may also act on ceramide phosphoethanolamine (CPE), lysophosphatidylcholine (LPC) and lysophosphatidylethanolamine (LPE), but not on lysophosphatidylserine (LPS), and lysophosphatidylglycerol (LPG). It acts by transphosphatidylation, releasing exclusively cyclic phosphate products as second products. Induces dermonecrosis, hemolysis, increased vascular permeability, edema, inflammatory response, and platelet aggregation. The sequence is that of Dermonecrotic toxin LdSicTox-alphaIB1aiv from Loxosceles deserta (Desert recluse spider).